A 532-amino-acid chain; its full sequence is Fe-S cluster assembly factor HCF101, chloroplastic (532 aa).

Residues 1–61 constitute a chloroplast transit peptide; the sequence is MPLLHPQSLR…RVSQNLSVAK (61 aa). An N-acetylalanine modification is found at A62. 184–191 is an ATP binding site; the sequence is CKGGVGKS.

The protein belongs to the Mrp/NBP35 ATP-binding proteins family. It depends on [4Fe-4S] cluster as a cofactor. In terms of tissue distribution, expressed in aerial tissues exposed to light. Very low expression in roots.

It localises to the plastid. Its subcellular location is the chloroplast stroma. Its function is as follows. Required for photosystem I (PSI) biosynthesis and assembly. May serve as a chloroplast scaffold protein that specifically assembles iron-sulfur (4Fe-4S) clusters and transfers them to the chloroplast PSI and ferredoxin-thioredoxin (FTR) complexes. Can assemble a 4Fe-4S cluster and transfer it to apoproteins in yeast cells. Probably not required for assembly or stability of plastidic 2Fe-2S clusters. The chain is Fe-S cluster assembly factor HCF101, chloroplastic (HCF101) from Arabidopsis thaliana (Mouse-ear cress).